A 240-amino-acid polypeptide reads, in one-letter code: UPF0309 protein in nagA 3'region (240 aa).

Residues 31–206 (IVKRLVQGGI…CAQIIEILHE (176 aa)) form the SIS domain.

Belongs to the UPF0309 family.

The sequence is that of UPF0309 protein in nagA 3'region from Lysinibacillus sphaericus (Bacillus sphaericus).